We begin with the raw amino-acid sequence, 197 residues long: Peptide deformylase (197 aa).

Positions 106 and 148 each coordinate Fe cation. Glu149 is a catalytic residue. His152 lines the Fe cation pocket.

The protein belongs to the polypeptide deformylase family. Fe(2+) is required as a cofactor.

The enzyme catalyses N-terminal N-formyl-L-methionyl-[peptide] + H2O = N-terminal L-methionyl-[peptide] + formate. Removes the formyl group from the N-terminal Met of newly synthesized proteins. Requires at least a dipeptide for an efficient rate of reaction. N-terminal L-methionine is a prerequisite for activity but the enzyme has broad specificity at other positions. This chain is Peptide deformylase, found in Mycobacterium leprae (strain TN).